The sequence spans 309 residues: MSHQLPDIQASRPDVTVGLSQVGVTDVDKLVKIERDGETPLVLMAEFEVFVDLPSGRKGIDMSRNMQVIDETLEAAVSGSVSRVEDMCGDVAERLLEKHEYTTTATVEMTADLVMHEDTPASELPTQNTISILASATATDEGTREEIGAEVIGMTVCPCSQGMSASRARDVMHDLDIEDETIETFLEQVPQPGHSQRGHATLTVTADGSPDVDLIELADIARDAMSARIYNLAKRPDEDYMTYHAHADAKFVEDCVRSMAEQVVNSFEHLDDDAVVRMKQSNDESIHQHNAHAEREVTLEQLRAEVSAS.

The protein belongs to the GTP cyclohydrolase IV family. As to quaternary structure, homodimer. Requires Fe(2+) as cofactor.

It carries out the reaction GTP + H2O = 7,8-dihydroneopterin 2',3'-cyclic phosphate + formate + diphosphate + H(+). The protein operates within cofactor biosynthesis; 5,6,7,8-tetrahydromethanopterin biosynthesis. In terms of biological role, converts GTP to 7,8-dihydro-D-neopterin 2',3'-cyclic phosphate, the first intermediate in the biosynthesis of coenzyme methanopterin. This is GTP cyclohydrolase MptA from Haloquadratum walsbyi (strain DSM 16790 / HBSQ001).